We begin with the raw amino-acid sequence, 181 residues long: Adenylate kinase (181 aa).

10–15 is a binding site for ATP; it reads GAGKGT. The NMP stretch occupies residues 30–59; the sequence is STGDLFRDNITNETELGVEAKRYLDAGDLV. Residues Thr-31, Arg-36, 57–59, 85–88, and Gln-92 contribute to the AMP site; these read DLV and GYPR. Positions 126-132 are LID; it reads GRGRADD. An ATP-binding site is contributed by Arg-127. Positions 129 and 140 each coordinate AMP. ATP is bound at residue Gly-166.

This sequence belongs to the adenylate kinase family. In terms of assembly, monomer.

Its subcellular location is the cytoplasm. The catalysed reaction is AMP + ATP = 2 ADP. The protein operates within purine metabolism; AMP biosynthesis via salvage pathway; AMP from ADP: step 1/1. In terms of biological role, catalyzes the reversible transfer of the terminal phosphate group between ATP and AMP. Plays an important role in cellular energy homeostasis and in adenine nucleotide metabolism. The protein is Adenylate kinase of Mycobacterium sp. (strain MCS).